The following is a 38-amino-acid chain: ATP synthase subunit O, mitochondrial (38 aa).

The protein belongs to the ATPase delta chain family. F-type ATPases have 2 components, CF(1) - the catalytic core - and CF(0) - the membrane proton channel. CF(1) has five subunits: alpha(3), beta(3), gamma(1), delta(1), epsilon(1). CF(0) has three main subunits: a, b and c.

It localises to the mitochondrion. It is found in the mitochondrion inner membrane. Functionally, mitochondrial membrane ATP synthase (F(1)F(0) ATP synthase or Complex V) produces ATP from ADP in the presence of a proton gradient across the membrane which is generated by electron transport complexes of the respiratory chain. F-type ATPases consist of two structural domains, F(1) - containing the extramembraneous catalytic core and F(0) - containing the membrane proton channel, linked together by a central stalk and a peripheral stalk. During catalysis, ATP synthesis in the catalytic domain of F(1) is coupled via a rotary mechanism of the central stalk subunits to proton translocation. Part of the complex F(0) domain and the peripheric stalk, which acts as a stator to hold the catalytic alpha(3)beta(3) subcomplex and subunit a/ATP6 static relative to the rotary elements. The protein is ATP synthase subunit O, mitochondrial of Pisum sativum (Garden pea).